The following is a 475-amino-acid chain: Methylenetetrahydrofolate--tRNA-(uracil-5-)-methyltransferase TrmFO (475 aa).

13 to 18 contributes to the FAD binding site; that stretch reads GAGLAG.

This sequence belongs to the MnmG family. TrmFO subfamily. FAD is required as a cofactor.

The protein localises to the cytoplasm. The enzyme catalyses uridine(54) in tRNA + (6R)-5,10-methylene-5,6,7,8-tetrahydrofolate + NADH + H(+) = 5-methyluridine(54) in tRNA + (6S)-5,6,7,8-tetrahydrofolate + NAD(+). It carries out the reaction uridine(54) in tRNA + (6R)-5,10-methylene-5,6,7,8-tetrahydrofolate + NADPH + H(+) = 5-methyluridine(54) in tRNA + (6S)-5,6,7,8-tetrahydrofolate + NADP(+). Functionally, catalyzes the folate-dependent formation of 5-methyl-uridine at position 54 (M-5-U54) in all tRNAs. This is Methylenetetrahydrofolate--tRNA-(uracil-5-)-methyltransferase TrmFO from Bradyrhizobium diazoefficiens (strain JCM 10833 / BCRC 13528 / IAM 13628 / NBRC 14792 / USDA 110).